The primary structure comprises 286 residues: Ribosomal RNA small subunit methyltransferase H (286 aa).

Residues Gly30–His32, Asp49, Phe88, Asp97, and Gln104 each bind S-adenosyl-L-methionine. The segment at His260–Arg286 is disordered.

The protein belongs to the methyltransferase superfamily. RsmH family.

It is found in the cytoplasm. It catalyses the reaction cytidine(1402) in 16S rRNA + S-adenosyl-L-methionine = N(4)-methylcytidine(1402) in 16S rRNA + S-adenosyl-L-homocysteine + H(+). Functionally, specifically methylates the N4 position of cytidine in position 1402 (C1402) of 16S rRNA. The polypeptide is Ribosomal RNA small subunit methyltransferase H (Solibacter usitatus (strain Ellin6076)).